We begin with the raw amino-acid sequence, 242 residues long: ATP-dependent dethiobiotin synthetase BioD (242 aa).

15-20 (DVGKTV) is a binding site for ATP. Residue T19 coordinates Mg(2+). K40 is an active-site residue. S44 contributes to the substrate binding site. Residue E117 participates in Mg(2+) binding. ATP-binding positions include 117–120 (EGAG), 178–179 (NQ), and 208–210 (PYS).

It belongs to the dethiobiotin synthetase family. Homodimer. Mg(2+) serves as cofactor.

Its subcellular location is the cytoplasm. It catalyses the reaction (7R,8S)-7,8-diammoniononanoate + CO2 + ATP = (4R,5S)-dethiobiotin + ADP + phosphate + 3 H(+). The protein operates within cofactor biosynthesis; biotin biosynthesis; biotin from 7,8-diaminononanoate: step 1/2. Its function is as follows. Catalyzes a mechanistically unusual reaction, the ATP-dependent insertion of CO2 between the N7 and N8 nitrogen atoms of 7,8-diaminopelargonic acid (DAPA, also called 7,8-diammoniononanoate) to form a ureido ring. This is ATP-dependent dethiobiotin synthetase BioD from Halalkalibacterium halodurans (strain ATCC BAA-125 / DSM 18197 / FERM 7344 / JCM 9153 / C-125) (Bacillus halodurans).